Here is a 244-residue protein sequence, read N- to C-terminus: Carbonyl reductase [NADPH] 2 (244 aa).

Residue 11 to 39 (LVTGAGKGIGRDTVKALHVSGARVVAVTR) participates in NADP(+) binding. Residue S136 participates in substrate binding. Y149 functions as the Proton acceptor in the catalytic mechanism. A Phosphoserine modification is found at S176.

It belongs to the short-chain dehydrogenases/reductases (SDR) family. As to quaternary structure, homotetramer. As to expression, lung (ciliated cells, non-ciliated bronchiolar cells and type-II alveolar pneumocytes). Low expression in all extrapulmonary tissues, including adipose tissue.

The protein localises to the mitochondrion matrix. It carries out the reaction a secondary alcohol + NADP(+) = a ketone + NADPH + H(+). Its activity is regulated as follows. Allosteric enzyme exhibiting negative cooperativity. Activated 2-5 fold by fatty acids. Its function is as follows. May function in the pulmonary metabolism of endogenous carbonyl compounds, such as aliphatic aldehydes and ketones derived from lipid peroxidation, 3-ketosteroids and fatty aldehydes, as well as in xenobiotic metabolism. This is Carbonyl reductase [NADPH] 2 (CBR2) from Sus scrofa (Pig).